A 977-amino-acid chain; its full sequence is Probable RNA-dependent RNA polymerase 5 (977 aa).

The interval 103–122 (EEMSVDSDAPSPKSLKSEDK) is disordered.

This sequence belongs to the RdRP family.

The enzyme catalyses RNA(n) + a ribonucleoside 5'-triphosphate = RNA(n+1) + diphosphate. In terms of biological role, probably involved in the RNA silencing pathway and required for the generation of small interfering RNAs (siRNAs). This is Probable RNA-dependent RNA polymerase 5 (RDR5) from Arabidopsis thaliana (Mouse-ear cress).